The sequence spans 102 residues: Large ribosomal subunit protein bL21 (102 aa).

The protein belongs to the bacterial ribosomal protein bL21 family. Part of the 50S ribosomal subunit. Contacts protein L20.

Its function is as follows. This protein binds to 23S rRNA in the presence of protein L20. This is Large ribosomal subunit protein bL21 from Pediococcus pentosaceus (strain ATCC 25745 / CCUG 21536 / LMG 10740 / 183-1w).